The primary structure comprises 78 residues: Exodeoxyribonuclease 7 small subunit (78 aa).

Belongs to the XseB family. Heterooligomer composed of large and small subunits.

It is found in the cytoplasm. It carries out the reaction Exonucleolytic cleavage in either 5'- to 3'- or 3'- to 5'-direction to yield nucleoside 5'-phosphates.. Functionally, bidirectionally degrades single-stranded DNA into large acid-insoluble oligonucleotides, which are then degraded further into small acid-soluble oligonucleotides. The sequence is that of Exodeoxyribonuclease 7 small subunit from Nocardia farcinica (strain IFM 10152).